Here is a 147-residue protein sequence, read N- to C-terminus: Large ribosomal subunit protein uL15 (147 aa).

A disordered region spans residues 1–46 (MSIRLENLSYTPGARKEKHRKGRGHAAGKGKQAGRGQSGQKKRSTV). Residues 16–28 (KEKHRKGRGHAAG) show a composition bias toward basic residues.

Belongs to the universal ribosomal protein uL15 family. In terms of assembly, part of the 50S ribosomal subunit.

In terms of biological role, binds to the 23S rRNA. This chain is Large ribosomal subunit protein uL15, found in Mesomycoplasma hyopneumoniae (strain 7448) (Mycoplasma hyopneumoniae).